The following is a 381-amino-acid chain: Nitric oxide reductase FlRd-NAD(+) reductase (381 aa).

This sequence belongs to the FAD-dependent oxidoreductase family. FAD serves as cofactor.

Its subcellular location is the cytoplasm. It catalyses the reaction 2 reduced [nitric oxide reductase rubredoxin domain] + NAD(+) + H(+) = 2 oxidized [nitric oxide reductase rubredoxin domain] + NADH. It participates in nitrogen metabolism; nitric oxide reduction. In terms of biological role, one of at least two accessory proteins for anaerobic nitric oxide (NO) reductase. Reduces the rubredoxin moiety of NO reductase. The polypeptide is Nitric oxide reductase FlRd-NAD(+) reductase (Aliivibrio fischeri (strain ATCC 700601 / ES114) (Vibrio fischeri)).